Here is a 257-residue protein sequence, read N- to C-terminus: Pimeloyl-[acyl-carrier protein] methyl ester esterase (257 aa).

Residues 15–241 form the AB hydrolase-1 domain; the sequence is HLVLLHGWGL…KAAHAPFVSH (227 aa). Residues Trp-22, 82–83, and 143–147 contribute to the substrate site; these read SL and FLALQ. The active-site Nucleophile is Ser-82. Active-site residues include Asp-207 and His-235. His-235 is a substrate binding site.

Belongs to the AB hydrolase superfamily. Carboxylesterase BioH family. In terms of assembly, monomer.

Its subcellular location is the cytoplasm. The catalysed reaction is 6-carboxyhexanoyl-[ACP] methyl ester + H2O = 6-carboxyhexanoyl-[ACP] + methanol + H(+). Its pathway is cofactor biosynthesis; biotin biosynthesis. In terms of biological role, the physiological role of BioH is to remove the methyl group introduced by BioC when the pimeloyl moiety is complete. It allows to synthesize pimeloyl-ACP via the fatty acid synthetic pathway through the hydrolysis of the ester bonds of pimeloyl-ACP esters. The protein is Pimeloyl-[acyl-carrier protein] methyl ester esterase of Klebsiella pneumoniae subsp. pneumoniae (strain ATCC 700721 / MGH 78578).